Consider the following 449-residue polypeptide: tRNA-2-methylthio-N(6)-dimethylallyladenosine synthase (449 aa).

In terms of domain architecture, MTTase N-terminal spans 3–118 (KKVFVKTFGC…LPELLAQREA (116 aa)). 6 residues coordinate [4Fe-4S] cluster: cysteine 12, cysteine 49, cysteine 81, cysteine 155, cysteine 159, and cysteine 162. The 236-residue stretch at 141-376 (RVEGASAFVS…VINANIKSIS (236 aa)) folds into the Radical SAM core domain. A TRAM domain is found at 377–440 (ESRVGTVQRI…AYTLRGEVVT (64 aa)).

This sequence belongs to the methylthiotransferase family. MiaB subfamily. Monomer. The cofactor is [4Fe-4S] cluster.

It is found in the cytoplasm. It catalyses the reaction N(6)-dimethylallyladenosine(37) in tRNA + (sulfur carrier)-SH + AH2 + 2 S-adenosyl-L-methionine = 2-methylsulfanyl-N(6)-dimethylallyladenosine(37) in tRNA + (sulfur carrier)-H + 5'-deoxyadenosine + L-methionine + A + S-adenosyl-L-homocysteine + 2 H(+). Functionally, catalyzes the methylthiolation of N6-(dimethylallyl)adenosine (i(6)A), leading to the formation of 2-methylthio-N6-(dimethylallyl)adenosine (ms(2)i(6)A) at position 37 in tRNAs that read codons beginning with uridine. In Paracidovorax citrulli (strain AAC00-1) (Acidovorax citrulli), this protein is tRNA-2-methylthio-N(6)-dimethylallyladenosine synthase.